Here is a 383-residue protein sequence, read N- to C-terminus: S-adenosylmethionine synthase (383 aa).

Residue His15 coordinates ATP. Mg(2+) is bound at residue Asp17. Residue Glu43 coordinates K(+). Positions 56 and 99 each coordinate L-methionine. A flexible loop region spans residues 99–109; it reads QSPDINQGVDR. Residues 164–166, 230–231, Asp239, 245–246, Ala262, and Lys266 contribute to the ATP site; these read DAK, RF, and RK. Asp239 contributes to the L-methionine binding site. Lys270 contacts L-methionine.

It belongs to the AdoMet synthase family. As to quaternary structure, homotetramer; dimer of dimers. Requires Mg(2+) as cofactor. The cofactor is K(+).

It is found in the cytoplasm. It carries out the reaction L-methionine + ATP + H2O = S-adenosyl-L-methionine + phosphate + diphosphate. The protein operates within amino-acid biosynthesis; S-adenosyl-L-methionine biosynthesis; S-adenosyl-L-methionine from L-methionine: step 1/1. In terms of biological role, catalyzes the formation of S-adenosylmethionine (AdoMet) from methionine and ATP. The overall synthetic reaction is composed of two sequential steps, AdoMet formation and the subsequent tripolyphosphate hydrolysis which occurs prior to release of AdoMet from the enzyme. This Shewanella sp. (strain W3-18-1) protein is S-adenosylmethionine synthase.